A 342-amino-acid polypeptide reads, in one-letter code: Succinylglutamate desuccinylase (342 aa).

His62, Glu65, and His158 together coordinate Zn(2+). Glu222 is a catalytic residue.

It belongs to the AspA/AstE family. Succinylglutamate desuccinylase subfamily. Zn(2+) serves as cofactor.

The catalysed reaction is N-succinyl-L-glutamate + H2O = L-glutamate + succinate. It participates in amino-acid degradation; L-arginine degradation via AST pathway; L-glutamate and succinate from L-arginine: step 5/5. Its function is as follows. Transforms N(2)-succinylglutamate into succinate and glutamate. The chain is Succinylglutamate desuccinylase from Shewanella frigidimarina (strain NCIMB 400).